Reading from the N-terminus, the 308-residue chain is GATA transcription factor 10 (308 aa).

The GATA-type zinc finger occupies 214–268 (DGIVRICTHCETITTPQWRQGPSGPKTLCNACGVRFKSGRLVPEYRPASSPTFIP).

Belongs to the type IV zinc-finger family. Class A subfamily.

Its subcellular location is the nucleus. In terms of biological role, transcriptional activator that specifically binds 5'-GATA-3' or 5'-GAT-3' motifs within gene promoters. May be involved in the regulation of some light-responsive genes. The polypeptide is GATA transcription factor 10 (GATA10) (Arabidopsis thaliana (Mouse-ear cress)).